We begin with the raw amino-acid sequence, 178 residues long: MSGGKYVDSEGQLYTLPIREQGNIYKPNNKVMAEEMNEKQMYDAHTKEIDLVNRDPKHLNDDVVKIDFEDVIAEPEGTHSFDGIWKASFTTFTVTKYWFYRLLSSLVGIPVALIWGIYFAILSFLYIWAVVPCIKSFLIKIQCISRIYSICIHTFCDPLYEAIGKIFSNIRISMQKEI.

The residue at position 2 (Ser2) is an N-acetylserine. Ser2 is modified (phosphoserine). The required for homooligomerization stretch occupies residues 2–94 (SGGKYVDSEG…WKASFTTFTV (93 aa)). At 2–104 (SGGKYVDSEG…TKYWFYRLLS (103 aa)) the chain is on the cytoplasmic side. The residue at position 5 (Lys5) is an N6-acetyllysine; alternate. A Glycyl lysine isopeptide (Lys-Gly) (interchain with G-Cter in ubiquitin); alternate cross-link involves residue Lys5. Tyr6 carries the phosphotyrosine modification. Position 9 is a phosphoserine (Ser9). Residue Tyr14 is modified to Phosphotyrosine; by ABL1. Tyr25 bears the Phosphotyrosine mark. Residues Lys26, Lys30, Lys39, Lys47, and Lys57 each participate in a glycyl lysine isopeptide (Lys-Gly) (interchain with G-Cter in ubiquitin) cross-link. An interaction with CAVIN3 region spans residues 82–94 (DGIWKASFTTFTV). Positions 105–125 (SLVGIPVALIWGIYFAILSFL) form an intramembrane region, helical. The Cytoplasmic portion of the chain corresponds to 126 to 178 (YIWAVVPCIKSFLIKIQCISRIYSICIHTFCDPLYEAIGKIFSNIRISMQKEI). An interacts with SPRY1, SPRY2, SPRY3 and SPRY4 region spans residues 131–142 (VPCIKSFLIKIQ). 3 S-palmitoyl cysteine lipidation sites follow: Cys133, Cys143, and Cys156. The interval 149-160 (SICIHTFCDPLY) is interacts with SPRY1, SPRY2, and SPRY4. The interval 167–178 (FSNIRISMQKEI) is interacts with SPRY1, SPRY2, SPRY3 and SPRY4.

Belongs to the caveolin family. As to quaternary structure, homooligomer. Interacts with GLIPR2. Interacts with NOSTRIN. Interacts with SNAP25 and STX1A. Interacts (via the N-terminus) with DPP4; the interaction is direct. Interacts with CTNNB1, CDH1 and JUP. Interacts with PACSIN2; this interaction induces membrane tubulation. Interacts with SLC7A9. Interacts with BMX and BTK. Interacts with TGFBR1. Interacts with CAVIN3 (via leucine-zipper domain) in a cholesterol-sensitive manner. Interacts with CAVIN1. Interacts with EHD2 in a cholesterol-dependent manner. Forms a ternary complex with UBXN6 and VCP; mediates CAV1 targeting to lysosomes for degradation. Interacts with ABCG1; this interaction regulates ABCG1-mediated cholesterol efflux. Interacts with NEU3; this interaction enhances NEU3 sialidase activity within caveola. Interacts (via C-terminus) with SPRY1, SPRY2 (via C-terminus), SPRY3, and SPRY4. Interacts with IGFBP5; this interaction allows trafficking of IGFBP5 from the plasma membrane to the nucleus. Post-translationally, phosphorylated at Tyr-14 by ABL1 in response to oxidative stress. Ubiquitinated. Undergo monoubiquitination and multi- and/or polyubiquitination. Monoubiquitination of N-terminal lysines promotes integration in a ternary complex with UBXN6 and VCP which promotes oligomeric CAV1 targeting to lysosomes for degradation. Ubiquitinated by ZNRF1; leading to degradation and modulation of the TLR4-mediated immune response.

It localises to the golgi apparatus membrane. Its subcellular location is the cell membrane. It is found in the membrane. The protein resides in the caveola. The protein localises to the membrane raft. Its function is as follows. May act as a scaffolding protein within caveolar membranes. Forms a stable heterooligomeric complex with CAV2 that targets to lipid rafts and drives caveolae formation. Mediates the recruitment of CAVIN proteins (CAVIN1/2/3/4) to the caveolae. Interacts directly with G-protein alpha subunits and can functionally regulate their activity. Involved in the costimulatory signal essential for T-cell receptor (TCR)-mediated T-cell activation. Its binding to DPP4 induces T-cell proliferation and NF-kappa-B activation in a T-cell receptor/CD3-dependent manner. Recruits CTNNB1 to caveolar membranes and may regulate CTNNB1-mediated signaling through the Wnt pathway. Negatively regulates TGFB1-mediated activation of SMAD2/3 by mediating the internalization of TGFBR1 from membrane rafts leading to its subsequent degradation. Binds 20(S)-hydroxycholesterol (20(S)-OHC). The sequence is that of Caveolin-1 (CAV1) from Atelerix albiventris (Middle-African hedgehog).